Reading from the N-terminus, the 935-residue chain is Protein translocase subunit SecA (935 aa).

Residues Gln-86, 104 to 108 (GEGKT), and Asp-494 each bind ATP. Residues 879–935 (EQAATARAQQHSSAAVAAPEQGATQRGAFGQRVSAADDAAPANRAERRAQKKPTKRH) are disordered.

Belongs to the SecA family. As to quaternary structure, monomer and homodimer. Part of the essential Sec protein translocation apparatus which comprises SecA, SecYEG and auxiliary proteins SecDF. Other proteins may also be involved.

The protein localises to the cell membrane. It localises to the cytoplasm. It carries out the reaction ATP + H2O + cellular proteinSide 1 = ADP + phosphate + cellular proteinSide 2.. Functionally, part of the Sec protein translocase complex. Interacts with the SecYEG preprotein conducting channel. Has a central role in coupling the hydrolysis of ATP to the transfer of proteins into and across the cell membrane, serving as an ATP-driven molecular motor driving the stepwise translocation of polypeptide chains across the membrane. This Leifsonia xyli subsp. xyli (strain CTCB07) protein is Protein translocase subunit SecA.